A 708-amino-acid polypeptide reads, in one-letter code: F-box protein MAX2 homolog A (708 aa).

Positions 2 to 49 (ATQLNDLPDVILSNIIAAVTDVRSRNSTSFVCRKWLVLERSTRVSLTL) constitute an F-box domain.

As to quaternary structure, part of a putative SCF (SKP1/Cullin/F-box) ubiquitin ligase complex. Interacts with DAD2. Interacts with KAI2IA in the presence of (-)-germacrene D. In terms of tissue distribution, mainly expressed in fully expanded leaves, lateral roots, axillary and shoot apex, and, to a lower extent, in internodes and nodes.

It localises to the nucleus. Its function is as follows. Component of SCF(ASK-cullin-F-box) E3 ubiquitin ligase complexes, which may mediate the ubiquitination and subsequent proteasomal degradation of target proteins. Is necessary for responses to strigolactones and may be involved in the ubiquitin-mediated degradation of specific proteins that activate axillary growth. Targets probably SMAX1A to degradation upon the formation of an E3 SCF ubiquitin ligase complex (ASK-cullin-F-box) containing MAX2A and KAI2IA in response to (-)-germacrene D in the stigma. This chain is F-box protein MAX2 homolog A, found in Petunia hybrida (Petunia).